We begin with the raw amino-acid sequence, 316 residues long: Phosphoribosylaminoimidazole-succinocarboxamide synthase (316 aa).

This sequence belongs to the SAICAR synthetase family.

It catalyses the reaction 5-amino-1-(5-phospho-D-ribosyl)imidazole-4-carboxylate + L-aspartate + ATP = (2S)-2-[5-amino-1-(5-phospho-beta-D-ribosyl)imidazole-4-carboxamido]succinate + ADP + phosphate + 2 H(+). It functions in the pathway purine metabolism; IMP biosynthesis via de novo pathway; 5-amino-1-(5-phospho-D-ribosyl)imidazole-4-carboxamide from 5-amino-1-(5-phospho-D-ribosyl)imidazole-4-carboxylate: step 1/2. The sequence is that of Phosphoribosylaminoimidazole-succinocarboxamide synthase from Flavobacterium psychrophilum (strain ATCC 49511 / DSM 21280 / CIP 103535 / JIP02/86).